Reading from the N-terminus, the 338-residue chain is MQALVNRLWYDRQAGVHWLLVLLLLPLSGLFYLLTSLRRQLFRLGLKASARLDVPVIVVGNITVGGSGKTPTVIYLIELLRRNGYRPGVISRGYGVEFSGCKRVIAGMPANEVGDEPAMIVARTQVPMVIGSDRVAAGKALMDWQAVDVIISDDGLQHYRLKRDIEILVLDGKRRFGNGLLLPAGPLREGRWRQGRVDFTLVNGEGSGPEEFEMALAPGNWRSVADGQVVTANVDKSHESVAIAGIGNPQRFFDTLSEIGVQPSGQHAFDDHQAYSLEAIETVAAGRGVLMTEKDAVKCREFAKSNWWYLPVDAKIAPEFEQQLLTLLKRRENVQQGN.

63–70 contributes to the ATP binding site; sequence TVGGSGKT.

The protein belongs to the LpxK family.

The catalysed reaction is a lipid A disaccharide + ATP = a lipid IVA + ADP + H(+). Its pathway is glycolipid biosynthesis; lipid IV(A) biosynthesis; lipid IV(A) from (3R)-3-hydroxytetradecanoyl-[acyl-carrier-protein] and UDP-N-acetyl-alpha-D-glucosamine: step 6/6. Transfers the gamma-phosphate of ATP to the 4'-position of a tetraacyldisaccharide 1-phosphate intermediate (termed DS-1-P) to form tetraacyldisaccharide 1,4'-bis-phosphate (lipid IVA). This is Tetraacyldisaccharide 4'-kinase from Shewanella loihica (strain ATCC BAA-1088 / PV-4).